Here is a 401-residue protein sequence, read N- to C-terminus: Enoyl-[acyl-carrier-protein] reductase [NADH] (401 aa).

Residues 48–53 (GASSGY), 74–75 (FE), 111–112 (DA), and 140–141 (LA) each bind NAD(+). Tyr226 serves as a coordination point for substrate. Tyr236 acts as the Proton donor in catalysis. Residues Lys245 and 274–276 (VVT) each bind NAD(+).

The protein belongs to the TER reductase family. As to quaternary structure, monomer.

It carries out the reaction a 2,3-saturated acyl-[ACP] + NAD(+) = a (2E)-enoyl-[ACP] + NADH + H(+). Its pathway is lipid metabolism; fatty acid biosynthesis. Its function is as follows. Involved in the final reduction of the elongation cycle of fatty acid synthesis (FAS II). Catalyzes the reduction of a carbon-carbon double bond in an enoyl moiety that is covalently linked to an acyl carrier protein (ACP). The polypeptide is Enoyl-[acyl-carrier-protein] reductase [NADH] (Xylella fastidiosa (strain 9a5c)).